The primary structure comprises 425 residues: Enolase (425 aa).

Gln163 contributes to the (2R)-2-phosphoglycerate binding site. The active-site Proton donor is the Glu205. Mg(2+) is bound by residues Asp242, Glu285, and Asp312. Residues Lys337, Arg366, Ser367, and Lys388 each coordinate (2R)-2-phosphoglycerate. The active-site Proton acceptor is Lys337.

It belongs to the enolase family. Mg(2+) is required as a cofactor.

It is found in the cytoplasm. The protein resides in the secreted. The protein localises to the cell surface. It catalyses the reaction (2R)-2-phosphoglycerate = phosphoenolpyruvate + H2O. The protein operates within carbohydrate degradation; glycolysis; pyruvate from D-glyceraldehyde 3-phosphate: step 4/5. Catalyzes the reversible conversion of 2-phosphoglycerate (2-PG) into phosphoenolpyruvate (PEP). It is essential for the degradation of carbohydrates via glycolysis. The sequence is that of Enolase from Jannaschia sp. (strain CCS1).